A 130-amino-acid polypeptide reads, in one-letter code: Immunoglobulin kappa chain variable 9-120 (130 aa).

Positions 1–22 (MDMRAPAQIFGFLLLLFQGTRC) are cleaved as a signal peptide. The segment at 23-45 (DIQMTQSPSSLSASLGERVSLTC) is framework-1. A disulfide bridge links cysteine 45 with cysteine 110. Residues 46–56 (RASQDIGSSLN) form a complementarity-determining-1 region. The interval 57–71 (WLQQEPDGTIKRLIY) is framework-2. The interval 72–78 (ATSSLDS) is complementarity-determining-2. A framework-3 region spans residues 79 to 110 (GVPKRFSGSRSGSDYSLTISSLESEDFVDYYC). A complementarity-determining-3 region spans residues 111–119 (LQYASSPWT). Residues 120 to 129 (FGGGTKLEIK) are framework-4.

This is Immunoglobulin kappa chain variable 9-120 from Mus musculus (Mouse).